Reading from the N-terminus, the 218-residue chain is MGQKVHPIGMRIGVIRDWDSKWYAEKDYADFLHEDLRIRDYVAKRLSDASVSRVEIERAANRVNITIHTAKPGMVIGKGGSEVEALRKNLNELTQKRVHINIVEIKRADLDAKLVAENIARQLEGRVSFRRAQKQAIQRTMRAGAKGIKTQVSGRLGGADIARAEHYSEGTVPLHTLRADIDYAWEEADTTYGKLGVKVWIYRGEVLPTKKNNVEGGK.

The 69-residue stretch at 38–106 (IRDYVAKRLS…RVHINIVEIK (69 aa)) folds into the KH type-2 domain.

The protein belongs to the universal ribosomal protein uS3 family. Part of the 30S ribosomal subunit. Forms a tight complex with proteins S10 and S14.

Functionally, binds the lower part of the 30S subunit head. Binds mRNA in the 70S ribosome, positioning it for translation. The polypeptide is Small ribosomal subunit protein uS3 (Listeria monocytogenes serotype 4b (strain F2365)).